A 301-amino-acid chain; its full sequence is MANLRDIRKKIGSVKNTQKITHAMKLVSTSKLRKAEEVARNSRAYALKLDAVFDDVLSKMKNQGIEDIQSKYFRELERLEIKKVDIIFITADKGLCGGFNTNTIKKVLACTNEYKEKDIKVRLRGIGKKGNEYFSFNGIEVLDKINNLSSMPNYERAQEFMKKVVEDYLSGKTDKVIIIHNGFKNMISQEIRVKTILPIGYKIIHQNPQPNETQETITSEPSGSEDEILDSLAEKYVEYSLYYALIDSLAAEHSARMQAMDTATNNAKDLVKTLTISYNKARQEAITTELVEINAGVEALK.

Belongs to the ATPase gamma chain family. As to quaternary structure, F-type ATPases have 2 components, CF(1) - the catalytic core - and CF(0) - the membrane proton channel. CF(1) has five subunits: alpha(3), beta(3), gamma(1), delta(1), epsilon(1). CF(0) has three main subunits: a, b and c.

Its subcellular location is the cell inner membrane. Its function is as follows. Produces ATP from ADP in the presence of a proton gradient across the membrane. The gamma chain is believed to be important in regulating ATPase activity and the flow of protons through the CF(0) complex. The sequence is that of ATP synthase gamma chain from Helicobacter pylori (strain Shi470).